Consider the following 419-residue polypeptide: Serine hydroxymethyltransferase (419 aa).

Residues L121 and 125-127 (GHL) contribute to the (6S)-5,6,7,8-tetrahydrofolate site. Residue K230 is modified to N6-(pyridoxal phosphate)lysine. 355–357 (SPF) lines the (6S)-5,6,7,8-tetrahydrofolate pocket.

It belongs to the SHMT family. Homodimer. Requires pyridoxal 5'-phosphate as cofactor.

It is found in the cytoplasm. It catalyses the reaction (6R)-5,10-methylene-5,6,7,8-tetrahydrofolate + glycine + H2O = (6S)-5,6,7,8-tetrahydrofolate + L-serine. The protein operates within one-carbon metabolism; tetrahydrofolate interconversion. It participates in amino-acid biosynthesis; glycine biosynthesis; glycine from L-serine: step 1/1. In terms of biological role, catalyzes the reversible interconversion of serine and glycine with tetrahydrofolate (THF) serving as the one-carbon carrier. This reaction serves as the major source of one-carbon groups required for the biosynthesis of purines, thymidylate, methionine, and other important biomolecules. Also exhibits THF-independent aldolase activity toward beta-hydroxyamino acids, producing glycine and aldehydes, via a retro-aldol mechanism. The polypeptide is Serine hydroxymethyltransferase (Streptococcus equi subsp. zooepidemicus (strain MGCS10565)).